The sequence spans 464 residues: Asparagine--tRNA ligase (464 aa).

Belongs to the class-II aminoacyl-tRNA synthetase family. As to quaternary structure, homodimer.

The protein localises to the cytoplasm. The catalysed reaction is tRNA(Asn) + L-asparagine + ATP = L-asparaginyl-tRNA(Asn) + AMP + diphosphate + H(+). This Clostridium botulinum (strain Eklund 17B / Type B) protein is Asparagine--tRNA ligase.